The primary structure comprises 349 residues: Interferon regulatory factor 2 (349 aa).

The segment at residues 5 to 113 is a DNA-binding region (IRF tryptophan pentad repeat); that stretch reads RMRMRPWLEE…NAFRVYRMLP (109 aa). K75 and K78 each carry N6-acetyllysine. A Glycyl lysine isopeptide (Lys-Gly) (interchain with G-Cter in SUMO); alternate cross-link involves residue K137. K137 participates in a covalent cross-link: Glycyl lysine isopeptide (Lys-Gly) (interchain with G-Cter in SUMO2); alternate. Residue K166 forms a Glycyl lysine isopeptide (Lys-Gly) (interchain with G-Cter in SUMO) linkage. Position 225 is a phosphoserine (S225). A compositionally biased stretch (polar residues) spans 230–239; the sequence is YAESETTDSV. The interval 230–253 is disordered; the sequence is YAESETTDSVASDEENAEGRPHWR. K260 participates in a covalent cross-link: Glycyl lysine isopeptide (Lys-Gly) (interchain with G-Cter in SUMO2). Residue K293 forms a Glycyl lysine isopeptide (Lys-Gly) (interchain with G-Cter in SUMO) linkage. Residues 303 to 349 form a disordered region; sequence SSWPPFTDLPLPAPVTPTPSSSRPDRETRASVIKKTSDITQARVKSC.

It belongs to the IRF family. Interacts with BRD7, IRF2BP1 and IRF2BP2. Interacts with CREBBP in growing cells; the interaction acetylates IRF2 and regulates IRF2-dependent H4 promoter activity. In terms of processing, acetylated by CBP/ p300 during cell-growth. Acetylation on Lys-75 is required for stimulation of H4 promoter activity. Post-translationally, the major sites of sumoylation are Lys-137 and Lys-293. Sumoylation with SUMO1 increases its transcriptional repressor activity on IRF1 and diminishes its ability to activate ISRE and H4 promoter.

It is found in the nucleus. Specifically binds to the upstream regulatory region of type I IFN and IFN-inducible MHC class I genes (the interferon consensus sequence (ICS)) and represses those genes. Also acts as an activator for several genes including H4 and IL7. Constitutively binds to the ISRE promoter to activate IL7. Involved in cell cycle regulation through binding the site II (HiNF-M) promoter region of H4 and activating transcription during cell growth. Antagonizes IRF1 transcriptional activation. The chain is Interferon regulatory factor 2 (Irf2) from Mus musculus (Mouse).